The primary structure comprises 179 residues: Large ribosomal subunit protein uL5 (179 aa).

It belongs to the universal ribosomal protein uL5 family. In terms of assembly, part of the 50S ribosomal subunit; part of the 5S rRNA/L5/L18/L25 subcomplex. Contacts the 5S rRNA and the P site tRNA. Forms a bridge to the 30S subunit in the 70S ribosome.

Functionally, this is one of the proteins that bind and probably mediate the attachment of the 5S RNA into the large ribosomal subunit, where it forms part of the central protuberance. In the 70S ribosome it contacts protein S13 of the 30S subunit (bridge B1b), connecting the 2 subunits; this bridge is implicated in subunit movement. Contacts the P site tRNA; the 5S rRNA and some of its associated proteins might help stabilize positioning of ribosome-bound tRNAs. This chain is Large ribosomal subunit protein uL5, found in Buchnera aphidicola subsp. Schizaphis graminum (strain Sg).